The primary structure comprises 193 residues: ATP-dependent Clp protease proteolytic subunit 2 (193 aa).

The active-site Nucleophile is Ser-98. The active site involves His-123.

The protein belongs to the peptidase S14 family. In terms of assembly, fourteen ClpP subunits assemble into 2 heptameric rings which stack back to back to give a disk-like structure with a central cavity, resembling the structure of eukaryotic proteasomes.

It localises to the cytoplasm. The enzyme catalyses Hydrolysis of proteins to small peptides in the presence of ATP and magnesium. alpha-casein is the usual test substrate. In the absence of ATP, only oligopeptides shorter than five residues are hydrolyzed (such as succinyl-Leu-Tyr-|-NHMec, and Leu-Tyr-Leu-|-Tyr-Trp, in which cleavage of the -Tyr-|-Leu- and -Tyr-|-Trp bonds also occurs).. Functionally, cleaves peptides in various proteins in a process that requires ATP hydrolysis. Has a chymotrypsin-like activity. Plays a major role in the degradation of misfolded proteins. In Bacillus anthracis, this protein is ATP-dependent Clp protease proteolytic subunit 2.